Consider the following 275-residue polypeptide: Large ribosomal subunit protein uL2 (275 aa).

The segment at 224–275 (VMNPVDHPHGGGEGKSPIGRPSPVTPWGKPTLGYKTRKKNKASDKFIIKRRK) is disordered. The span at 264–275 (KASDKFIIKRRK) shows a compositional bias: basic and acidic residues.

Belongs to the universal ribosomal protein uL2 family. As to quaternary structure, part of the 50S ribosomal subunit. Forms a bridge to the 30S subunit in the 70S ribosome.

One of the primary rRNA binding proteins. Required for association of the 30S and 50S subunits to form the 70S ribosome, for tRNA binding and peptide bond formation. It has been suggested to have peptidyltransferase activity; this is somewhat controversial. Makes several contacts with the 16S rRNA in the 70S ribosome. This Acetivibrio thermocellus (strain ATCC 27405 / DSM 1237 / JCM 9322 / NBRC 103400 / NCIMB 10682 / NRRL B-4536 / VPI 7372) (Clostridium thermocellum) protein is Large ribosomal subunit protein uL2.